The sequence spans 421 residues: Serine--tRNA ligase (421 aa).

229-231 (TSE) is an L-serine binding site. Residues 260–262 (RKE) and V276 each bind ATP. E283 contributes to the L-serine binding site. Residue 347-350 (EIVS) participates in ATP binding. T383 lines the L-serine pocket.

This sequence belongs to the class-II aminoacyl-tRNA synthetase family. Type-1 seryl-tRNA synthetase subfamily. As to quaternary structure, homodimer. The tRNA molecule binds across the dimer.

It localises to the cytoplasm. It carries out the reaction tRNA(Ser) + L-serine + ATP = L-seryl-tRNA(Ser) + AMP + diphosphate + H(+). It catalyses the reaction tRNA(Sec) + L-serine + ATP = L-seryl-tRNA(Sec) + AMP + diphosphate + H(+). It participates in aminoacyl-tRNA biosynthesis; selenocysteinyl-tRNA(Sec) biosynthesis; L-seryl-tRNA(Sec) from L-serine and tRNA(Sec): step 1/1. Catalyzes the attachment of serine to tRNA(Ser). Is also able to aminoacylate tRNA(Sec) with serine, to form the misacylated tRNA L-seryl-tRNA(Sec), which will be further converted into selenocysteinyl-tRNA(Sec). This Nitrosopumilus maritimus (strain SCM1) protein is Serine--tRNA ligase.